The chain runs to 1054 residues: DIS3-like exonuclease 1 (1054 aa).

In terms of domain architecture, CSD1 spans 236 to 313 (AGIKSGRYIQ…WKGRTAALCE (78 aa)). Positions 313 to 332 (ENDSEDKASGESPSEPMPTG) are disordered. The region spanning 365 to 431 (ILVTPWDYRI…GEIATILVEN (67 aa)) is the CSD2 domain. One can recognise an RNB domain in the interval 465–816 (RRDLRSTHLV…VHRLLMAAIS (352 aa)). At S989 the chain carries Phosphoserine.

The protein belongs to the RNR ribonuclease family. Component of the RNA exosome complex. The catalytically inactive RNA exosome core (Exo-9) complex is believed to associate with catalytic subunits EXOSC10, and DIS3 or DIS3L in cytoplasmic- and nuclear-specific RNA exosome complex forms. It depends on Mg(2+) as a cofactor.

The protein localises to the cytoplasm. It catalyses the reaction Exonucleolytic cleavage in the 3'- to 5'-direction to yield nucleoside 5'-phosphates.. Catalytic component of the RNA exosome complex which has 3'-&gt;5' exoribonuclease activity and participates in a multitude of cellular RNA processing and degradation events. In the cytoplasm, the RNA exosome complex is involved in general mRNA turnover and specifically degrades inherently unstable mRNAs containing AU-rich elements (AREs) within their 3' untranslated regions, and in RNA surveillance pathways, preventing translation of aberrant mRNAs. It seems to be involved in degradation of histone mRNA. In Rattus norvegicus (Rat), this protein is DIS3-like exonuclease 1 (Dis3l).